We begin with the raw amino-acid sequence, 384 residues long: MSEQLVTPENVTTKDGKINLLDLNRQQMREFFKDLGEKPFRADQVMKWMYHYCCDNFDEMTDINKVLRGKLKEVAEIRAPEVVEEQRSSDGTIKWAIAVGDQRVETVYIPEVDRATLCVSSQVGCALECKFCSTAQQGFNRNLRVSEIIGQVWRAAKIVGAAKVTGQRPITNVVMMGMGEPLLNLNNVVPAMEIMLDDFGFGLSKRRVTLSTSGVVPALDKLGDMIDVALAISLHAPNDEIRDEIVPINKKYNIETFLAAVRRYLEKSNANQGRVTIEYVMLDHVNDGTEHAHQLAELLKDTPCKINLIPWNPFPGAPYGRSSNSRIDRFSKVLMSYGFTTIVRKTRGDDIDAACGQLAGDVIDRTKRTLRKRMQGEAIDIKAV.

Glu105 acts as the Proton acceptor in catalysis. The 240-residue stretch at 111–350 (EVDRATLCVS…TIVRKTRGDD (240 aa)) folds into the Radical SAM core domain. The cysteines at positions 118 and 355 are disulfide-linked. The [4Fe-4S] cluster site is built by Cys125, Cys129, and Cys132. S-adenosyl-L-methionine-binding positions include 179–180 (GE), Ser211, 233–235 (SLH), and Asn312. Cys355 functions as the S-methylcysteine intermediate in the catalytic mechanism.

It belongs to the radical SAM superfamily. RlmN family. [4Fe-4S] cluster serves as cofactor.

Its subcellular location is the cytoplasm. The catalysed reaction is adenosine(2503) in 23S rRNA + 2 reduced [2Fe-2S]-[ferredoxin] + 2 S-adenosyl-L-methionine = 2-methyladenosine(2503) in 23S rRNA + 5'-deoxyadenosine + L-methionine + 2 oxidized [2Fe-2S]-[ferredoxin] + S-adenosyl-L-homocysteine. It carries out the reaction adenosine(37) in tRNA + 2 reduced [2Fe-2S]-[ferredoxin] + 2 S-adenosyl-L-methionine = 2-methyladenosine(37) in tRNA + 5'-deoxyadenosine + L-methionine + 2 oxidized [2Fe-2S]-[ferredoxin] + S-adenosyl-L-homocysteine. Specifically methylates position 2 of adenine 2503 in 23S rRNA and position 2 of adenine 37 in tRNAs. m2A2503 modification seems to play a crucial role in the proofreading step occurring at the peptidyl transferase center and thus would serve to optimize ribosomal fidelity. The protein is Dual-specificity RNA methyltransferase RlmN of Escherichia coli O9:H4 (strain HS).